A 376-amino-acid chain; its full sequence is Hydroxylysine kinase (376 aa).

Asp229 acts as the Proton acceptor in catalysis.

This sequence belongs to the aminoglycoside phosphotransferase family.

It is found in the cytoplasm. It catalyses the reaction (5R)-5-hydroxy-L-lysine + GTP = (5R)-5-phosphooxy-L-lysine + GDP + H(+). Its function is as follows. Catalyzes the GTP-dependent phosphorylation of 5-hydroxy-L-lysine. This is Hydroxylysine kinase (HYKK) from Bos taurus (Bovine).